Reading from the N-terminus, the 1232-residue chain is DNA-directed RNA polymerase subunit beta (1232 aa).

The segment at 1170 to 1232 is disordered; that stretch reads SVDEDADELE…LDLDDFGDEH (63 aa). Positions 1171–1180 are enriched in acidic residues; sequence VDEDADELEV. Positions 1189–1198 are enriched in basic and acidic residues; the sequence is PEEKEEKEKE. Over residues 1199–1232 the composition is skewed to acidic residues; it reads DSDEYDDLREEDVEPDLEELSLDDLDLDDFGDEH.

It belongs to the RNA polymerase beta chain family. In terms of assembly, the RNAP catalytic core consists of 2 alpha, 1 beta, 1 beta' and 1 omega subunit. When a sigma factor is associated with the core the holoenzyme is formed, which can initiate transcription.

It catalyses the reaction RNA(n) + a ribonucleoside 5'-triphosphate = RNA(n+1) + diphosphate. Its function is as follows. DNA-dependent RNA polymerase catalyzes the transcription of DNA into RNA using the four ribonucleoside triphosphates as substrates. The chain is DNA-directed RNA polymerase subunit beta from Clostridium botulinum (strain Hall / ATCC 3502 / NCTC 13319 / Type A).